The following is a 182-amino-acid chain: ATP synthase subunit delta (182 aa).

This sequence belongs to the ATPase delta chain family. In terms of assembly, F-type ATPases have 2 components, F(1) - the catalytic core - and F(0) - the membrane proton channel. F(1) has five subunits: alpha(3), beta(3), gamma(1), delta(1), epsilon(1). F(0) has three main subunits: a(1), b(2) and c(10-14). The alpha and beta chains form an alternating ring which encloses part of the gamma chain. F(1) is attached to F(0) by a central stalk formed by the gamma and epsilon chains, while a peripheral stalk is formed by the delta and b chains.

It localises to the cell inner membrane. Its function is as follows. F(1)F(0) ATP synthase produces ATP from ADP in the presence of a proton or sodium gradient. F-type ATPases consist of two structural domains, F(1) containing the extramembraneous catalytic core and F(0) containing the membrane proton channel, linked together by a central stalk and a peripheral stalk. During catalysis, ATP synthesis in the catalytic domain of F(1) is coupled via a rotary mechanism of the central stalk subunits to proton translocation. This protein is part of the stalk that links CF(0) to CF(1). It either transmits conformational changes from CF(0) to CF(1) or is implicated in proton conduction. The sequence is that of ATP synthase subunit delta from Histophilus somni (strain 2336) (Haemophilus somnus).